Here is a 273-residue protein sequence, read N- to C-terminus: MSKLQDVIVQEMKVKKRIDSAEEIMELKQFIKNYVQSHSFIKSLVLGISGGQDSTLVGKLVQMSVNELREEGIDCTFIAVKLPYGVQKDADEVEQALRFIEPDEIVTVNIKPAVDQSVQSLKEAGIVLTDFQKGNEKARERMKVQFSIASNRQGIVVGTDHSAENITGFYTKYGDGAADIAPIFGLNKRQGRQLLAYLGAPKELYEKTPTADLEDDKPQLPDEDALGVTYEAIDNYLEGKPVSPEEQKVIENHYIRNAHKRELAYTRYTWPKS.

Residue 47–54 (GISGGQDS) participates in ATP binding. D53 is a binding site for Mg(2+). R139 serves as a coordination point for deamido-NAD(+). T159 contributes to the ATP binding site. E164 lines the Mg(2+) pocket. Positions 172 and 179 each coordinate deamido-NAD(+). 2 residues coordinate ATP: K188 and T210. Residue 259–260 (HK) coordinates deamido-NAD(+).

This sequence belongs to the NAD synthetase family. Homodimer.

The enzyme catalyses deamido-NAD(+) + NH4(+) + ATP = AMP + diphosphate + NAD(+) + H(+). The protein operates within cofactor biosynthesis; NAD(+) biosynthesis; NAD(+) from deamido-NAD(+) (ammonia route): step 1/1. Its function is as follows. Catalyzes the ATP-dependent amidation of deamido-NAD to form NAD. Uses ammonia as a nitrogen source. This Staphylococcus aureus (strain bovine RF122 / ET3-1) protein is NH(3)-dependent NAD(+) synthetase.